A 27-amino-acid polypeptide reads, in one-letter code: Conotoxin Lo6/7b (27 aa).

Intrachain disulfides connect Cys-2-Cys-16, Cys-9-Cys-19, and Cys-15-Cys-26. Residue Tyr-27 is modified to Tyrosine amide.

In terms of tissue distribution, expressed by the venom duct.

It localises to the secreted. In terms of biological role, 1 uM of this toxin does not show any effect on voltage-gated sodium and potassium channels. Does not show antibacterial activity on both Gram-negative and Gram-positive bacteria. This Conasprella longurionis (Cone snail) protein is Conotoxin Lo6/7b.